We begin with the raw amino-acid sequence, 320 residues long: ATP-dependent 6-phosphofructokinase (320 aa).

Glycine 12 is an ATP binding site. Residues 22–26 (RGVVR) and 55–60 (RYSVSD) each bind ADP. Residues 73-74 (RF) and 103-106 (GDGS) each bind ATP. Aspartate 104 contributes to the Mg(2+) binding site. 126-128 (TID) contributes to the substrate binding site. Catalysis depends on aspartate 128, which acts as the Proton acceptor. Residue arginine 155 coordinates ADP. Residues arginine 163 and 170-172 (MGR) contribute to the substrate site. ADP-binding positions include 186–188 (GCE), lysine 212, and 214–216 (KKH). Substrate contacts are provided by residues glutamate 223, arginine 244, and 250–253 (HIQR).

The protein belongs to the phosphofructokinase type A (PFKA) family. ATP-dependent PFK group I subfamily. Prokaryotic clade 'B1' sub-subfamily. In terms of assembly, homotetramer. Mg(2+) is required as a cofactor.

The protein resides in the cytoplasm. It catalyses the reaction beta-D-fructose 6-phosphate + ATP = beta-D-fructose 1,6-bisphosphate + ADP + H(+). Its pathway is carbohydrate degradation; glycolysis; D-glyceraldehyde 3-phosphate and glycerone phosphate from D-glucose: step 3/4. With respect to regulation, allosterically activated by ADP and other diphosphonucleosides, and allosterically inhibited by phosphoenolpyruvate. Catalyzes the phosphorylation of D-fructose 6-phosphate to fructose 1,6-bisphosphate by ATP, the first committing step of glycolysis. This is ATP-dependent 6-phosphofructokinase from Cronobacter sakazakii (strain ATCC BAA-894) (Enterobacter sakazakii).